Reading from the N-terminus, the 472-residue chain is Ribosomal protein uS12 methylthiotransferase RimO (472 aa).

The MTTase N-terminal domain occupies proline 22–alanine 133. [4Fe-4S] cluster-binding residues include cysteine 31, cysteine 67, cysteine 96, cysteine 171, cysteine 175, and cysteine 178. The Radical SAM core domain maps to threonine 157–glutamate 386. The TRAM domain occupies glutamine 389–aspartate 460.

This sequence belongs to the methylthiotransferase family. RimO subfamily. [4Fe-4S] cluster is required as a cofactor.

Its subcellular location is the cytoplasm. The enzyme catalyses L-aspartate(89)-[ribosomal protein uS12]-hydrogen + (sulfur carrier)-SH + AH2 + 2 S-adenosyl-L-methionine = 3-methylsulfanyl-L-aspartate(89)-[ribosomal protein uS12]-hydrogen + (sulfur carrier)-H + 5'-deoxyadenosine + L-methionine + A + S-adenosyl-L-homocysteine + 2 H(+). Its function is as follows. Catalyzes the methylthiolation of an aspartic acid residue of ribosomal protein uS12. This chain is Ribosomal protein uS12 methylthiotransferase RimO, found in Prochlorococcus marinus (strain MIT 9303).